Here is a 92-residue protein sequence, read N- to C-terminus: Large ribosomal subunit protein bL25 (92 aa).

Belongs to the bacterial ribosomal protein bL25 family. Part of the 50S ribosomal subunit; part of the 5S rRNA/L5/L18/L25 subcomplex. Contacts the 5S rRNA. Binds to the 5S rRNA independently of L5 and L18.

In terms of biological role, this is one of the proteins that binds to the 5S RNA in the ribosome where it forms part of the central protuberance. The protein is Large ribosomal subunit protein bL25 of Photobacterium damsela subsp. piscicida (Pasteurella piscicida).